Here is a 457-residue protein sequence, read N- to C-terminus: Karyogamy meiotic segregation protein 2 (457 aa).

The residue at position 134 (S134) is a Phosphoserine.

As to quaternary structure, interacts with sad1.

It is found in the cytoplasm. Its subcellular location is the cytoskeleton. The protein localises to the microtubule organizing center. It localises to the spindle pole body. This is Karyogamy meiotic segregation protein 2 (kms2) from Schizosaccharomyces pombe (strain 972 / ATCC 24843) (Fission yeast).